A 545-amino-acid polypeptide reads, in one-letter code: CTP synthase (545 aa).

Positions 1 to 266 are amidoligase domain; the sequence is MTTNYIFVTG…DDLVCARFGI (266 aa). Position 14 (serine 14) interacts with CTP. A UTP-binding site is contributed by serine 14. Residues 15 to 20 and aspartate 72 contribute to the ATP site; that span reads SLGKGI. Aspartate 72 and glutamate 140 together coordinate Mg(2+). CTP-binding positions include 147–149, 187–192, and lysine 223; these read DIE and KTKPTQ. UTP-binding positions include 187–192 and lysine 223; that span reads KTKPTQ. 239 to 241 is a binding site for ATP; it reads KDV. The 252-residue stretch at 291–542 folds into the Glutamine amidotransferase type-1 domain; the sequence is TIGMVGKYTE…VKAAGQFQRG (252 aa). Glycine 352 contacts L-glutamine. Cysteine 379 functions as the Nucleophile; for glutamine hydrolysis in the catalytic mechanism. L-glutamine is bound by residues 380–383, glutamate 403, and arginine 470; that span reads LGMQ. Active-site residues include histidine 515 and glutamate 517.

Belongs to the CTP synthase family. As to quaternary structure, homotetramer.

It carries out the reaction UTP + L-glutamine + ATP + H2O = CTP + L-glutamate + ADP + phosphate + 2 H(+). The enzyme catalyses L-glutamine + H2O = L-glutamate + NH4(+). It catalyses the reaction UTP + NH4(+) + ATP = CTP + ADP + phosphate + 2 H(+). Its pathway is pyrimidine metabolism; CTP biosynthesis via de novo pathway; CTP from UDP: step 2/2. With respect to regulation, allosterically activated by GTP, when glutamine is the substrate; GTP has no effect on the reaction when ammonia is the substrate. The allosteric effector GTP functions by stabilizing the protein conformation that binds the tetrahedral intermediate(s) formed during glutamine hydrolysis. Inhibited by the product CTP, via allosteric rather than competitive inhibition. Its function is as follows. Catalyzes the ATP-dependent amination of UTP to CTP with either L-glutamine or ammonia as the source of nitrogen. Regulates intracellular CTP levels through interactions with the four ribonucleotide triphosphates. In Vibrio cholerae serotype O1 (strain ATCC 39541 / Classical Ogawa 395 / O395), this protein is CTP synthase.